Here is a 641-residue protein sequence, read N- to C-terminus: Fructose-1,6-bisphosphatase class 3 (641 aa).

This sequence belongs to the FBPase class 3 family. It depends on Mn(2+) as a cofactor.

It carries out the reaction beta-D-fructose 1,6-bisphosphate + H2O = beta-D-fructose 6-phosphate + phosphate. It participates in carbohydrate biosynthesis; gluconeogenesis. This is Fructose-1,6-bisphosphatase class 3 from Ligilactobacillus salivarius (strain UCC118) (Lactobacillus salivarius).